A 478-amino-acid polypeptide reads, in one-letter code: uncharacterized protein (478 aa).

Residues Met1–Ala19 form the signal peptide. Residues Ser20 to Gln214 lie on the Lumenal side of the membrane. A helical transmembrane segment spans residues Ile215–Ile235. The Cytoplasmic portion of the chain corresponds to Cys236–Lys240. Residues Leu241 to Val261 traverse the membrane as a helical segment. Residues Lys262–Asp289 are Lumenal-facing. The helical transmembrane segment at Gly290–Ile310 threads the bilayer. The Cytoplasmic segment spans residues Arg311–Met317. The helical transmembrane segment at Val318–Val338 threads the bilayer. Residues Tyr339–Val356 lie on the Lumenal side of the membrane. The chain crosses the membrane as a helical span at residues Trp357 to Phe377. The Cytoplasmic segment spans residues Arg378 to Trp391. The chain crosses the membrane as a helical span at residues Asn392 to Phe412. The Lumenal segment spans residues Asp413–Glu427. The helical transmembrane segment at Tyr428–Tyr448 threads the bilayer. Over Ser449 to Phe478 the chain is Cytoplasmic.

It is found in the endoplasmic reticulum membrane. The protein localises to the golgi apparatus membrane. This is an uncharacterized protein from Schizosaccharomyces pombe (strain 972 / ATCC 24843) (Fission yeast).